A 148-amino-acid polypeptide reads, in one-letter code: Large ribosomal subunit protein bL9 (148 aa).

It belongs to the bacterial ribosomal protein bL9 family.

Its function is as follows. Binds to the 23S rRNA. This Sulfurimonas denitrificans (strain ATCC 33889 / DSM 1251) (Thiomicrospira denitrificans (strain ATCC 33889 / DSM 1251)) protein is Large ribosomal subunit protein bL9.